The following is a 328-amino-acid chain: Fructokinase-2 (328 aa).

Belongs to the carbohydrate kinase PfkB family.

The enzyme catalyses D-fructose + ATP = D-fructose 6-phosphate + ADP + H(+). It participates in glycan biosynthesis; starch biosynthesis. Its function is as follows. May play an important role in maintaining the flux of carbon towards starch formation. The sequence is that of Fructokinase-2 (FRK2) from Solanum lycopersicum (Tomato).